The following is a 199-amino-acid chain: Ribonuclease HII (199 aa).

Positions 11–199 (SRVAGVDEVG…RRSFLRRLLG (189 aa)) constitute an RNase H type-2 domain. Positions 17, 18, and 113 each coordinate a divalent metal cation.

It belongs to the RNase HII family. Mn(2+) is required as a cofactor. Requires Mg(2+) as cofactor.

The protein resides in the cytoplasm. The catalysed reaction is Endonucleolytic cleavage to 5'-phosphomonoester.. In terms of biological role, endonuclease that specifically degrades the RNA of RNA-DNA hybrids. The chain is Ribonuclease HII from Synechococcus sp. (strain CC9902).